Reading from the N-terminus, the 130-residue chain is Large ribosomal subunit protein bL20c (130 aa).

Belongs to the bacterial ribosomal protein bL20 family.

It localises to the plastid. The protein localises to the chloroplast. Functionally, binds directly to 23S ribosomal RNA and is necessary for the in vitro assembly process of the 50S ribosomal subunit. It is not involved in the protein synthesizing functions of that subunit. The protein is Large ribosomal subunit protein bL20c of Oenothera argillicola (Appalachian evening primrose).